The chain runs to 484 residues: Probable autolysin PH (484 aa).

Positions 5–148 (KNQAEKWFDN…YYDDPMYFIR (144 aa)) constitute a Peptidase C51 domain. Residues 181-363 (IMLVAGHGYN…YSKLIAGAIH (183 aa)) form the MurNAc-LAA domain. The SH3b domain occupies 402–472 (KETGYYTVAN…IATGEVDKAG (71 aa)).

The enzyme catalyses Hydrolyzes the link between N-acetylmuramoyl residues and L-amino acid residues in certain cell-wall glycopeptides.. In terms of biological role, has weak lytic activity toward S.aureus cells. Full-length protein has no activity, but fusion of the Peptidase C51 domain to the lysostaphin SH3 cell wall binding domain yields an active chimeric enzyme, suggesting that PH may be functional. The polypeptide is Probable autolysin PH (Staphylococcus aureus (strain NCTC 8325 / PS 47)).